The primary structure comprises 647 residues: MEDPEGTEGEREGCTGWFEVEAIIEKQTGDNISEDEDENAYDSGTDLIDFIDDSNINNEQAEHEAARALFNAQEGEDDLHAVSAVKRKFTSSPESAGQDGVEKHGSPRAKHICVNTECVLPKRKPCHVEDSGYGNSEVEAQQMADQVDGQNGDWQSNSSQSSGVGASNSDVSCTSIEDNEENSNRTLKSIQNIMCENSIKTTVLFKFKETYGVSFMELVRPFKSNRSSCTDWCIIGMGVTPSVAEGLKVLIQPYSIYAHLQCLTCDRGVLILLLIRFKCGKNRLTVSKLMSQLLNIPETHMVIEPPKLRSATCALYWYRTGLSNISEVYGTTPEWIEQQTVLQHSFDNSIFDFGEMVQWAYDHDITDDSDIAYKYAQLADVNSNAAAFLKSNSQAKIVKDCATMCRHYKRAERKHMNIGQWIQYRCDRIDDGGDWRPIVRFLRYQDIEFTAFLDAFKKFLKGIPKKNCLVLYGPANTGKSYFGMSLIRFLSGCVISYVNSKSHFWLQPLTDAKVGMIDDVTPICWTYIDDYMRNALDGNDISVDVKHRALVQIKCPPLILTTNTNAGTDPRWPYLHSRLVVFHFKNPFPFDENGNPIYEINNENWKSFFSRTWCKLDLIQEEDKENDGVDTGTFKCSAGKNTRSIRS.

Positions 86 to 88 (KRK) match the Nuclear localization signal motif. Disordered regions lie at residues 88–107 (KFTS…HGSP) and 146–178 (QVDG…SIED). Residues S92 and S106 each carry the phosphoserine; by host modification. Residues 149–169 (GQNGDWQSNSSQSSGVGASNS) are compositionally biased toward low complexity. Residues 182–348 (NSNRTLKSIQ…QTVLQHSFDN (167 aa)) are DNA-binding region. The SF3 helicase domain occupies 447-597 (IEFTAFLDAF…FPFDENGNPI (151 aa)). 473 to 480 (GPANTGKS) is an ATP binding site. K554 participates in a covalent cross-link: Glycyl lysine isopeptide (Lys-Gly) (interchain with G-Cter in SUMO).

It belongs to the papillomaviridae E1 protein family. In terms of assembly, can form hexamers. Interacts with E2 protein; this interaction increases E1 DNA binding specificity. Interacts with host DNA polymerase subunit POLA2. Interacts with host single stranded DNA-binding protein RPA1. Interacts with host TOP1; this interaction stimulates the enzymatic activity of TOP1. Post-translationally, phosphorylated. Sumoylated.

The protein localises to the host nucleus. The enzyme catalyses Couples ATP hydrolysis with the unwinding of duplex DNA by translocating in the 3'-5' direction.. It catalyses the reaction ATP + H2O = ADP + phosphate + H(+). Its function is as follows. ATP-dependent DNA 3'-5' helicase required for initiation of viral DNA replication. It forms a complex with the viral E2 protein. The E1-E2 complex binds to the replication origin which contains binding sites for both proteins. During the initial step, a dimer of E1 interacts with a dimer of protein E2 leading to a complex that binds the viral origin of replication with high specificity. Then, a second dimer of E1 displaces the E2 dimer in an ATP-dependent manner to form the E1 tetramer. Following this, two E1 monomers are added to each half of the site, which results in the formation of two E1 trimers on the viral ori. Subsequently, two hexamers will be created. The double hexamer acts as a bi-directional helicase machinery and unwinds the viral DNA and then recruits the host DNA polymerase to start replication. The sequence is that of Replication protein E1 from Homo sapiens (Human).